The following is a 387-amino-acid chain: MATTKSFLILIVMILATTSSTFASLEEMVTVLSIDGGGIKGIIPGTILEFLEGQLQKMDNNADARLADYFDVIGGTSTGGLLTSMITTPNENNRPFAAANEIVPFFFEHGPHIFNSSTGQFFGPKYDGKYLMQVLQENLGETRVHQALTEVAISSFDIKTNKPVIFTKSNLAKSPELDAKMYDICYSTAAAPTYFPPHYFTTNTINGDKYEFNLVDGAVATVADPALLSISVATRLAEKDPAFASIRSLNYKKMLLLSLGTGTTSEFDKTYTAEETAKWGAIQWMLVIQRMTDAASSYMTDYYLSTVFQAQNSQKNYLRVQENALTGTTTEMDDASEANMESLVQVGENLLKKPVSKDNPETYEEALKRFAKLLSDRKKLRANKASY.

A signal peptide spans 1–23 (MATTKSFLILIVMILATTSSTFA). The PNPLA domain occupies 32–230 (LSIDGGGIKG…TVADPALLSI (199 aa)). Residues 36 to 41 (GGGIKG) carry the GXGXXG motif. Residues 75-79 (GTSTG) carry the GXSXG motif. S77 functions as the Nucleophile in the catalytic mechanism. A glycan (N-linked (GlcNAc...) asparagine) is linked at N115. The active-site Proton acceptor is D216. The short motif at 216 to 218 (DGA) is the DGA/G element. Residues 361-385 (ETYEEALKRFAKLLSDRKKLRANKA) adopt a coiled-coil conformation.

The protein belongs to the patatin family. In terms of tissue distribution, tuber.

The protein localises to the vacuole. Probable lipolytic acyl hydrolase (LAH), an activity which is thought to be involved in the response of tubers to pathogens. In Solanum tuberosum (Potato), this protein is Patatin-08.